The following is a 1383-amino-acid chain: DNA-directed RNA polymerase subunit beta'' (1383 aa).

Positions 220, 289, 296, and 299 each coordinate Zn(2+).

This sequence belongs to the RNA polymerase beta' chain family. RpoC2 subfamily. In terms of assembly, in plastids the minimal PEP RNA polymerase catalytic core is composed of four subunits: alpha, beta, beta', and beta''. When a (nuclear-encoded) sigma factor is associated with the core the holoenzyme is formed, which can initiate transcription. The cofactor is Zn(2+).

Its subcellular location is the plastid. The protein localises to the chloroplast. It catalyses the reaction RNA(n) + a ribonucleoside 5'-triphosphate = RNA(n+1) + diphosphate. In terms of biological role, DNA-dependent RNA polymerase catalyzes the transcription of DNA into RNA using the four ribonucleoside triphosphates as substrates. This is DNA-directed RNA polymerase subunit beta'' from Oenothera elata subsp. hookeri (Hooker's evening primrose).